The chain runs to 328 residues: DhaKLM operon coactivator DhaQ (328 aa).

In terms of domain architecture, DhaK spans 6–328 (STNEIPEEML…LNVPTGAFAW (323 aa)). Histidine 215 carries the post-translational modification Tele-(1,2,3-trihydroxypropan-2-yl)histidine.

Homodimer. Interacts with a homodimer of DhaS.

Functionally, coactivator for the transcription factor DhaS. The heterotetramer formed by DhaQ and DhaS functions as a transcriptional regulator. Activated by covalent binding of dihydroxyacetone to DhaQ. The complex activates the dhaKLM operon. The protein is DhaKLM operon coactivator DhaQ (dhaQ) of Lactococcus lactis subsp. lactis (strain IL1403) (Streptococcus lactis).